We begin with the raw amino-acid sequence, 580 residues long: Serine/threonine-protein kinase PINK1, mitochondrial (580 aa).

A mitochondrion-targeting transit peptide spans 1–77 (MAVRQALGRG…RFFRQSVAGL (77 aa)). The Mitochondrial intermembrane portion of the chain corresponds to 78 to 93 (AARIQRQFMVRARGGA). Residues 94–110 (GPCGRAVFLAFGLGLGL) traverse the membrane as a helical segment. The tract at residues 111–117 (IEEKQAE) is required for outer membrane localization. At 111 to 580 (IEEKQAEGRR…LLLSSWRAAP (470 aa)) the chain is on the cytoplasmic side. The 355-residue stretch at 156 to 510 (YLIGQAIGKG…LAANVLHLSL (355 aa)) folds into the Protein kinase domain. ATP contacts are provided by residues 162–170 (IGKGCNAAV) and lysine 186. A Phosphoserine; by autocatalysis modification is found at serine 227. The active-site Proton acceptor is aspartate 361. Serine 401 carries the phosphoserine; by autocatalysis modification.

Belongs to the protein kinase superfamily. Ser/Thr protein kinase family. Upon mitochondrial depolarization, it forms a supercomplex with TOM and TIM23 complexes. PINK1-TOM-TIM23 supercomplex formation requires PINK1 interaction with TOMM20 and TOMM70 and is critical for PINK1 stabilization at the outer mitochondrial membrane, kinase activation and downstream mitophagy. Upon mitochondrial depolarization, interacts with TIMM23; the interaction is required for PINK1 accumulation at the outer mitochondrial membrane, kinase activation by autophosphorylation and PRKN recruitement to mitochondria. Interacts with PRKN. Interacts with FBXO7. Forms a complex with PRKN and PARK7. Interacts with NENF. It depends on Mg(2+) as a cofactor. Post-translationally, proteolytically cleaved. In healthy cells, the precursor is continuously imported into the inner mitochondrial membrane (IMM), where it is proteolytically cleaved by mitochondrial-processing peptidase (MPP) and then undergoes further proteolytic cleavage by PARL or AFG3L2 to give rise to the 52 kDa short form. The 52 kDa short form is then released into the cytosol where it rapidly undergoes proteasome-dependent degradation. In unhealthy cells, when cellular stress conditions lead to the loss of mitochondrial membrane potential, mitochondrial import is impaired leading to the precursor accumulating on the outer mitochondrial membrane (OMM). If accumulation at the OMM fails and it is imported into the depolarized mitochondria, it undergoes cleavage by the IMM protease OMA1, promoting its subsequent degradation by the proteasome. In terms of processing, autophosphorylated. Loss of mitochondrial membrane potential results in the precursor accumulating on the outer mitochondrial membrane (OMM) where it is activated by autophosphorylation. Autophosphorylation at Ser-227 and Ser-401 is essential for selective recruitment of PRKN to depolarized mitochondria, via PINK1-dependent phosphorylation of ubiquitin and PRKN. High levels expressed in testis, lower levels in brain, heart, lung, liver and kidney.

Its subcellular location is the mitochondrion outer membrane. It localises to the mitochondrion inner membrane. The protein resides in the cytoplasm. It is found in the cytosol. It catalyses the reaction L-seryl-[protein] + ATP = O-phospho-L-seryl-[protein] + ADP + H(+). The enzyme catalyses L-threonyl-[protein] + ATP = O-phospho-L-threonyl-[protein] + ADP + H(+). Its function is as follows. Serine/threonine-protein kinase which acts as a sensor of mitochondrial damage and protects against mitochondrial dysfunction during cellular stress. It phosphorylates mitochondrial proteins to coordinate mitochondrial quality control mechanisms that remove and replace dysfunctional mitochondrial components. Depending on the severity of mitochondrial damage, activity ranges from preventing apoptosis and stimulating mitochondrial biogenesis to eliminating severely damaged mitochondria via PINK1-PRKN-dependent mitophagy. When cellular stress results in irreversible mitochondrial damage, PINK1 accumulates at the outer mitochondrial membrane (OMM) where it phosphorylates pre-existing polyubiquitin chains at 'Ser-65', recruits PRKN from the cytosol to the OMM and activates PRKN by phosphorylation at 'Ser-65'. Activated PRKN then ubiquinates VDAC1 and other OMM proteins to initiate mitophagy. The PINK1-PRKN pathway also promotes fission of damaged mitochondria by phosphorylating and thus promoting the PRKN-dependent degradation of mitochondrial proteins involved in fission such as MFN2. This prevents the refusion of unhealthy mitochondria with the mitochondrial network or initiates mitochondrial fragmentation facilitating their later engulfment by autophagosomes. Also promotes mitochondrial fission independently of PRKN and ATG7-mediated mitophagy, via the phosphorylation and activation of DNM1L. Regulates motility of damaged mitochondria by promoting the ubiquitination and subsequent degradation of MIRO1 and MIRO2; in motor neurons, this likely inhibits mitochondrial intracellular anterograde transport along the axons which probably increases the chance of the mitochondria undergoing mitophagy in the soma. Required for ubiquinone reduction by mitochondrial complex I by mediating phosphorylation of complex I subunit NDUFA10. Phosphorylates LETM1, positively regulating its mitochondrial calcium transport activity. The sequence is that of Serine/threonine-protein kinase PINK1, mitochondrial (Pink1) from Mus musculus (Mouse).